Reading from the N-terminus, the 486-residue chain is MAAAAGAAARGGGVIPAGKGGSLRSPGKPVVLADITNTGRPNPTGSVHAIADVLKENAKLRHLLAERNKVIEVSRVELQKIRLALQAMQQKNLQLVQANSQMFAEINQGKDRIKLLQHELACTIAVLKVKGSELEKMSKTSNNQQNRAKILEKKTRSSKCAPTKAHQMAAGSIREHLVEIQSAVPSYTSCHEPPQDKTNKRCTNRRKSESCEVTMDTNTVQHSCRPHVEYNGSSHDDDPRKTRRRRSARLNPGSFEVAEICDKLHEDATVPSAPSSNVPKLQEPNAGKDMICGGKMKSLQKELPCDAIAQVVEAPELKEIQEAGSSVAGGEAHKFDIEDPEPPRKSMRIDANKRKLESFESRLASNKEDCINAICDSTSSVPIQHEQKRKLSRRKSSRLDPGPWEVTNGTFEIVQEDTVAPSAPSSSNALIEQTKNDMQNDRSCSTKPSDEQVIGRRSSVGRPSRRAAEKIVSYKEVPLNIKMRRP.

Positions 71–154 form a coiled coil; the sequence is IEVSRVELQK…QNRAKILEKK (84 aa). Disordered stretches follow at residues 137-163, 187-209, 222-251, 323-346, 382-403, and 418-467; these read MSKT…CAPT, YTSC…RKSE, HSCR…ARLN, AGSS…PRKS, PIQH…DPGP, and TVAP…SRRA. Residues 331–346 are compositionally biased toward basic and acidic residues; sequence EAHKFDIEDPEPPRKS. Over residues 387-396 the composition is skewed to basic residues; sequence QKRKLSRRKS. The span at 423 to 433 shows a compositional bias: polar residues; it reads APSSSNALIEQ.

The protein belongs to the shugoshin family. In terms of tissue distribution, highly expressed in roots. Expressed in panicles. Expressed at low levels in leaves.

It localises to the nucleus. Its subcellular location is the nucleolus. The protein resides in the chromosome. It is found in the centromere. Plays a central role in chromosome cohesion during meiosis I by preventing premature dissociation of cohesin complex from centromeres after prophase, when most of cohesin complex dissociates from chromosomes arms. Required for the timely assembly and maintenance of synaptonemal complex (SC) during early prophase I. Required for maintenance of centromeric cohesion before prophase II and correct segregation of chromatids during meiosis II. Has apparently no function in mitosis. The sequence is that of Shugoshin-1 from Oryza sativa subsp. japonica (Rice).